A 418-amino-acid chain; its full sequence is Glutamyl-tRNA(Gln) amidotransferase subunit D (418 aa).

An Asparaginase/glutaminase domain is found at 74 to 405 (KNISILSTGG…KEAKELMSKN (332 aa)). Active-site residues include Thr84, Thr160, Asp161, and Lys237.

This sequence belongs to the asparaginase 1 family. GatD subfamily. In terms of assembly, heterodimer of GatD and GatE.

It catalyses the reaction L-glutamyl-tRNA(Gln) + L-glutamine + ATP + H2O = L-glutaminyl-tRNA(Gln) + L-glutamate + ADP + phosphate + H(+). Functionally, allows the formation of correctly charged Gln-tRNA(Gln) through the transamidation of misacylated Glu-tRNA(Gln) in organisms which lack glutaminyl-tRNA synthetase. The reaction takes place in the presence of glutamine and ATP through an activated gamma-phospho-Glu-tRNA(Gln). The GatDE system is specific for glutamate and does not act on aspartate. The polypeptide is Glutamyl-tRNA(Gln) amidotransferase subunit D (Methanococcus maripaludis (strain DSM 14266 / JCM 13030 / NBRC 101832 / S2 / LL)).